We begin with the raw amino-acid sequence, 452 residues long: Flavanone 7-O-glucoside 2''-O-beta-L-rhamnosyltransferase (452 aa).

Catalysis depends on His-21, which acts as the Proton acceptor. Residue His-21 coordinates an anthocyanidin. The active-site Charge relay is the Asp-121. Residues 136 to 156 form a helical membrane-spanning segment; it reads IAAILFLPLSAVACSFLLHNI. UDP-beta-L-rhamnose-binding residues include Ser-268, Val-330, His-347, Gly-351, Ser-352, and Glu-355. Residues 407-436 adopt a coiled-coil conformation; it reads KHVVLQEEAKQIRRKANEISESMKKIGDAE.

Belongs to the UDP-glycosyltransferase family. In terms of assembly, monomer. Expressed in young fruits and leaves.

It is found in the membrane. The enzyme catalyses flavanone 7-O-beta-D-glucoside + UDP-beta-L-rhamnose = flavanone 7-O-[alpha-L-rhamnosyl-(1-&gt;2)-beta-D-glucoside] + UDP + H(+). Functionally, involved in the production of the bitter neohesperidosides in citrus. Shows a strict specificity for UDP-rhamnose as donor. The protein is Flavanone 7-O-glucoside 2''-O-beta-L-rhamnosyltransferase (C12RT1) of Citrus maxima (Pomelo).